The primary structure comprises 150 residues: Large ribosomal subunit protein bL9 (150 aa).

This sequence belongs to the bacterial ribosomal protein bL9 family.

Functionally, binds to the 23S rRNA. The polypeptide is Large ribosomal subunit protein bL9 (Clavibacter sepedonicus (Clavibacter michiganensis subsp. sepedonicus)).